Here is a 285-residue protein sequence, read N- to C-terminus: Bifunctional protein FolD 2 (285 aa).

NADP(+)-binding positions include 164–166, Ser-189, and Val-230; that span reads GRS.

It belongs to the tetrahydrofolate dehydrogenase/cyclohydrolase family. As to quaternary structure, homodimer.

It carries out the reaction (6R)-5,10-methylene-5,6,7,8-tetrahydrofolate + NADP(+) = (6R)-5,10-methenyltetrahydrofolate + NADPH. The catalysed reaction is (6R)-5,10-methenyltetrahydrofolate + H2O = (6R)-10-formyltetrahydrofolate + H(+). It participates in one-carbon metabolism; tetrahydrofolate interconversion. Catalyzes the oxidation of 5,10-methylenetetrahydrofolate to 5,10-methenyltetrahydrofolate and then the hydrolysis of 5,10-methenyltetrahydrofolate to 10-formyltetrahydrofolate. The sequence is that of Bifunctional protein FolD 2 from Geobacter metallireducens (strain ATCC 53774 / DSM 7210 / GS-15).